Consider the following 249-residue polypeptide: Probable transcriptional regulatory protein GOX1679 (249 aa).

The protein belongs to the TACO1 family.

Its subcellular location is the cytoplasm. This is Probable transcriptional regulatory protein GOX1679 from Gluconobacter oxydans (strain 621H) (Gluconobacter suboxydans).